Consider the following 428-residue polypeptide: 26S proteasome regulatory subunit 7 (428 aa).

Position 211 to 218 (211 to 218 (GPPGTGKT)) interacts with ATP.

Belongs to the AAA ATPase family.

Its subcellular location is the cytoplasm. The protein resides in the nucleus. Functionally, the 26S proteasome is involved in the ATP-dependent degradation of ubiquitinated proteins. The regulatory (or ATPase) complex confers ATP dependency and substrate specificity to the 26S complex. The chain is 26S proteasome regulatory subunit 7 (psmC2) from Dictyostelium discoideum (Social amoeba).